A 165-amino-acid chain; its full sequence is REP-associated tyrosine transposase (165 aa).

This sequence belongs to the transposase 17 family. RAYT subfamily. Monomer.

Cleavage occurs in the presence of magnesium, but is much more pronounced with manganese. Functionally, transposase that is always flanked by repeated extragenic palindrome (REP) sequences, which are clustered in structures called bacterial interspersed mosaic elements (BIMEs). RayT catalyzes cleavage and recombination of BIMEs. Binds REP sequences and cleaves BIMEs both upstream and downstream of the REP sequence. Could be important in the creation of BIME variability and amplification. This chain is REP-associated tyrosine transposase, found in Escherichia coli (strain K12).